A 426-amino-acid chain; its full sequence is MSKSENLFAAARELIPGGVNSPVRAFTGVGGTPLFIERADGAYLYDADGKAYIDYVGSWGPMVLGHNHPAIRNAVIEAAERGLSFGAPTEMEVKMAQLVTELVPTMDMVRMVNSGTEATMSAIRLARGFTRRDKIIKFEGCYHGHADHLLVKAGSGALTLGQPNSPGVPADFAKHTLTCTYNDLASVREAFELYPQDIACIIVEPVAGNMNCIPPQPDFLPGLRALCDEFGALLIIDEVMTGFRVALAGAQAYYNVVPDLTCLGKIIGGGMPVGAFGGRREVMEALAPTGPVYQAGTLSGNPIAMAAGFACLSEVAQPGVHSTLDALTTQLAEGLLDAAQEAGVPLVVNHVGGMFGFFFTDADSVTCYHDVVKCDVERFKRFFHLMLEEGVYFAPSAFEAGFMSVAHSEEDINNTIDAARRVFAKL.

Position 265 is an N6-(pyridoxal phosphate)lysine (K265).

The protein belongs to the class-III pyridoxal-phosphate-dependent aminotransferase family. HemL subfamily. Homodimer. It depends on pyridoxal 5'-phosphate as a cofactor.

It localises to the cytoplasm. It catalyses the reaction (S)-4-amino-5-oxopentanoate = 5-aminolevulinate. It functions in the pathway porphyrin-containing compound metabolism; protoporphyrin-IX biosynthesis; 5-aminolevulinate from L-glutamyl-tRNA(Glu): step 2/2. The polypeptide is Glutamate-1-semialdehyde 2,1-aminomutase (Cronobacter sakazakii (strain ATCC BAA-894) (Enterobacter sakazakii)).